We begin with the raw amino-acid sequence, 212 residues long: Ras-related protein Rab-2A (212 aa).

An N-acetylalanine modification is found at Ala-2. A required for interaction with PRKCI region spans residues 2 to 19; it reads AYAYLFKYIIIGDTGVGK. GTP contacts are provided by Gly-16, Val-17, Gly-18, Lys-19, Ser-20, Cys-21, and Thr-38. Ser-20 lines the Mg(2+) pocket. The short motif at 37–42 is the Switch 1 element; it reads LTIGVE. 2 residues coordinate Mg(2+): Thr-38 and Asp-61. Residues 63–72 carry the Switch 2 motif; it reads AGQESFRSIT. Gly-64, Asn-119, Lys-120, Asp-122, Ala-150, and Lys-151 together coordinate GTP. The interval 190 to 212 is disordered; sequence QHAATNASHGSNQGGQQAGGGCC. A compositionally biased stretch (gly residues) spans 201–212; it reads NQGGQQAGGGCC. 2 S-geranylgeranyl cysteine lipidation sites follow: Cys-211 and Cys-212.

It belongs to the small GTPase superfamily. Rab family. As to quaternary structure, interacts with PRKCI. Interacts with TRIP11. Interacts (in GTP-bound form) with GARIN1B. Interacts (GTP-bound) with HOPS complex component VPS39; interaction contributes to obtaining a functional HOPS complex that promotes autophagosome-lysosome membrane fusion driven by STX17-SNAP29-VAMP8. Interacts with VPS41. Mg(2+) serves as cofactor. In terms of processing, prenylated. Prenylation is required for association with cellular membranes.

It is found in the endoplasmic reticulum-Golgi intermediate compartment membrane. The protein localises to the melanosome. It localises to the endoplasmic reticulum membrane. Its subcellular location is the golgi apparatus membrane. The protein resides in the cytoplasmic vesicle. It is found in the secretory vesicle. The protein localises to the acrosome. It localises to the autophagosome membrane. It carries out the reaction GTP + H2O = GDP + phosphate + H(+). Regulated by guanine nucleotide exchange factors (GEFs) which promote the exchange of bound GDP for free GTP, GTPase activating proteins (GAPs) which increase the GTP hydrolysis activity, and GDP dissociation inhibitors (GDIs) which inhibit the dissociation of the nucleotide from the GTPase. In terms of biological role, the small GTPases Rab are key regulators of intracellular membrane trafficking, from the formation of transport vesicles to their fusion with membranes. Rabs cycle between active GTP-bound and inactive GDP-bound states. In their active state, drive transport of vesicular carriers from donor organelles to acceptor organelles to regulate the membrane traffic that maintains organelle identity and morphology. RAB2A regulates autophagy by promoting autophagosome-lysosome fusion via recruitment of the HOPS endosomal tethering complex; this process involves autophagosomal RAB2A and lysosomal RAB39A recruitment of HOPS subcomplexes VPS39-VPS11 and VPS41-VPS16-VPS18-VPS33A, respectively, which assemble into a functional complex to mediate membrane tethering and SNAREs-driven membrane fusion. Required for protein transport from the endoplasmic reticulum to the Golgi complex. Regulates the compacted morphology of the Golgi. Together with RAB2B, redundantly required for efficient autophagic flux. This is Ras-related protein Rab-2A from Mus musculus (Mouse).